The following is a 248-amino-acid chain: Urease accessory protein UreG 1 (248 aa).

Over residues 1–14 (MLPEHHDHGHEHGG) the composition is skewed to basic and acidic residues. The segment at 1-36 (MLPEHHDHGHEHGGNGHGHGHRHQVNFDPTAAEPDP) is disordered. 53–60 (GPVGSGKT) lines the GTP pocket.

This sequence belongs to the SIMIBI class G3E GTPase family. UreG subfamily. In terms of assembly, homodimer. UreD, UreF and UreG form a complex that acts as a GTP-hydrolysis-dependent molecular chaperone, activating the urease apoprotein by helping to assemble the nickel containing metallocenter of UreC. The UreE protein probably delivers the nickel.

It localises to the cytoplasm. Functionally, facilitates the functional incorporation of the urease nickel metallocenter. This process requires GTP hydrolysis, probably effectuated by UreG. This is Urease accessory protein UreG 1 from Saccharopolyspora erythraea (strain ATCC 11635 / DSM 40517 / JCM 4748 / NBRC 13426 / NCIMB 8594 / NRRL 2338).